Consider the following 364-residue polypeptide: Serine/threonine-protein kinase ENV7 (364 aa).

Residues Cys13, Cys14, and Cys15 are each lipidated (S-palmitoyl cysteine). Residues 30-364 (YRIQRLLGEG…LLNLLQDLDT (335 aa)) form the Protein kinase domain. ATP is bound by residues 36 to 44 (LGEGGMSFV) and Lys69. Catalysis depends on Asp215, which acts as the Proton acceptor.

The protein belongs to the protein kinase superfamily. Ser/Thr protein kinase family.

It localises to the vacuole membrane. It catalyses the reaction L-seryl-[protein] + ATP = O-phospho-L-seryl-[protein] + ADP + H(+). The catalysed reaction is L-threonyl-[protein] + ATP = O-phospho-L-threonyl-[protein] + ADP + H(+). Serine/threonine-protein kinase involved in vacuolar processing and morphology. The protein is Serine/threonine-protein kinase ENV7 (ENV7) of Saccharomyces cerevisiae (strain ATCC 204508 / S288c) (Baker's yeast).